The primary structure comprises 206 residues: Guanylate kinase (206 aa).

A Guanylate kinase-like domain is found at 5 to 183 (FNLLILSGPS…SKEIILSIAK (179 aa)). Residue 12-19 (GPSGAGKS) coordinates ATP.

Belongs to the guanylate kinase family.

The protein resides in the cytoplasm. It carries out the reaction GMP + ATP = GDP + ADP. Functionally, essential for recycling GMP and indirectly, cGMP. The polypeptide is Guanylate kinase (gmk) (Helicobacter pylori (strain J99 / ATCC 700824) (Campylobacter pylori J99)).